We begin with the raw amino-acid sequence, 937 residues long: CAP-Gly domain-containing linker protein 1 homolog (937 aa).

The region spanning 39 to 81 is the CAP-Gly domain; it reads GPIHGKDGMFCGIELLEPNGKHDGTFQGVSYFIATPYHGIFAP. Disordered regions lie at residues 90–131 and 264–548; these read EELP…VMST and LPND…SRLQ. Over residues 268–281 the composition is skewed to polar residues; it reads LNANFSNKNSTTTF. The segment covering 285–295 has biased composition (basic and acidic residues); sequence ETPKVEIRENG. Over residues 296-309 the composition is skewed to polar residues; the sequence is NLDNSIETPPQQSP. 4 stretches are compositionally biased toward basic and acidic residues: residues 317–353, 383–396, 409–424, and 463–473; these read HESDSSSKKDDTKSDKSPTKKSQKMEEKPVVKKKEEP, IEAEKTKPKKEIKS, PQKENKEGGEMTETPR, and AKERVEKEKKI. The segment covering 492-501 has biased composition (low complexity); it reads SSIPSTSSAS. 2 coiled-coil regions span residues 566–740 and 773–800; these read EDNE…VDEI and QQIEDLRRKQIHDEEEKEAMKRSFDLMQ. 2 disordered regions span residues 819 to 866 and 916 to 937; these read MESR…DSMN and PTIKSESSRIGNTSDSGIGLVM. Over residues 832 to 844 the composition is skewed to low complexity; that stretch reads RSRSSASGSRPIS. The segment covering 845-858 has biased composition (polar residues); that stretch reads MATSNGGDQRLSTS.

The polypeptide is CAP-Gly domain-containing linker protein 1 homolog (Caenorhabditis elegans).